The following is a 117-amino-acid chain: Large ribosomal subunit protein uL18 (117 aa).

Belongs to the universal ribosomal protein uL18 family. As to quaternary structure, part of the 50S ribosomal subunit; part of the 5S rRNA/L5/L18/L25 subcomplex. Contacts the 5S and 23S rRNAs.

This is one of the proteins that bind and probably mediate the attachment of the 5S RNA into the large ribosomal subunit, where it forms part of the central protuberance. This chain is Large ribosomal subunit protein uL18, found in Leuconostoc mesenteroides subsp. mesenteroides (strain ATCC 8293 / DSM 20343 / BCRC 11652 / CCM 1803 / JCM 6124 / NCDO 523 / NBRC 100496 / NCIMB 8023 / NCTC 12954 / NRRL B-1118 / 37Y).